The sequence spans 378 residues: UDP-N-acetylglucosamine--N-acetylmuramyl-(pentapeptide) pyrophosphoryl-undecaprenol N-acetylglucosamine transferase (378 aa).

UDP-N-acetyl-alpha-D-glucosamine contacts are provided by residues 14–16 (TGG), N125, R165, S193, and Q293.

It belongs to the glycosyltransferase 28 family. MurG subfamily.

It localises to the cell inner membrane. The enzyme catalyses di-trans,octa-cis-undecaprenyl diphospho-N-acetyl-alpha-D-muramoyl-L-alanyl-D-glutamyl-meso-2,6-diaminopimeloyl-D-alanyl-D-alanine + UDP-N-acetyl-alpha-D-glucosamine = di-trans,octa-cis-undecaprenyl diphospho-[N-acetyl-alpha-D-glucosaminyl-(1-&gt;4)]-N-acetyl-alpha-D-muramoyl-L-alanyl-D-glutamyl-meso-2,6-diaminopimeloyl-D-alanyl-D-alanine + UDP + H(+). The protein operates within cell wall biogenesis; peptidoglycan biosynthesis. Cell wall formation. Catalyzes the transfer of a GlcNAc subunit on undecaprenyl-pyrophosphoryl-MurNAc-pentapeptide (lipid intermediate I) to form undecaprenyl-pyrophosphoryl-MurNAc-(pentapeptide)GlcNAc (lipid intermediate II). This Bartonella bacilliformis (strain ATCC 35685 / KC583 / Herrer 020/F12,63) protein is UDP-N-acetylglucosamine--N-acetylmuramyl-(pentapeptide) pyrophosphoryl-undecaprenol N-acetylglucosamine transferase.